The primary structure comprises 339 residues: tRNA N6-adenosine threonylcarbamoyltransferase (339 aa).

Residues His111 and His115 each contribute to the Fe cation site. Substrate-binding positions include 139 to 143, Asp172, Gly185, Asp189, and Asn280; that span reads LVSGG. Asp308 is a binding site for Fe cation.

This sequence belongs to the KAE1 / TsaD family. It depends on Fe(2+) as a cofactor.

The protein resides in the cytoplasm. It catalyses the reaction L-threonylcarbamoyladenylate + adenosine(37) in tRNA = N(6)-L-threonylcarbamoyladenosine(37) in tRNA + AMP + H(+). In terms of biological role, required for the formation of a threonylcarbamoyl group on adenosine at position 37 (t(6)A37) in tRNAs that read codons beginning with adenine. Is involved in the transfer of the threonylcarbamoyl moiety of threonylcarbamoyl-AMP (TC-AMP) to the N6 group of A37, together with TsaE and TsaB. TsaD likely plays a direct catalytic role in this reaction. This chain is tRNA N6-adenosine threonylcarbamoyltransferase, found in Bacteroides fragilis (strain ATCC 25285 / DSM 2151 / CCUG 4856 / JCM 11019 / LMG 10263 / NCTC 9343 / Onslow / VPI 2553 / EN-2).